Reading from the N-terminus, the 596-residue chain is MWQVLRGWRKGWQSPRGALAWAVQGQPCPPCSRAVASVGKDEYTFVVVGAGSAGCVLASRLTEDPNHRVLLLEAGPKDLLMGSKRLQWKIHMPAALVSNLCDDKYNWYYHTEPQPGMDSRVLYWPRGRVWGGSSSLNAMVYIRGHAEDYNRWHREGAEGWDYAHCLPYFRKAQRHELGANMYRGGDGPLHVSRGKTNHPLHQAFLQAARQAGYPFTEDMNGFQQEGFGWMDMTVHQGKRWSTACAYLHPVLSRPNLRAEVQTLVSRVLFEGTRAVGVEYIKDGQRHKAYVSREVILSGGAINSPQLLMLSGVGNADDLRKLDIPVVCHLPGVGQNLQDHLEVYVQQACTQPITLHSAQKPLRKVCIGLEWLWSYTGDGATAHLETGGFIRSRPGVPHPDIQFHFLPSQVIDHGRKPTQQEAYQVHVGTMRATSVGWLKLRSANPRDHPVIHPNYLSTETDVEDFRQCVRLSREIFAQEALAPFRGKELQPGSHVQSDKEIDAFVRAKADSAYHPSCTCKMGRSSDPTAVVDAQTKVIGVENLRVVDASIMPSVVSGNLNAPTVMIAEKAADIIKGHPALEDKNVPVYKPQTLDTQR.

Residues Met1–Ala34 constitute a mitochondrion transit peptide. An FAD-binding site is contributed by Thr44–Glu73. Lys438 bears the N6-succinyllysine mark. N6-acetyllysine; alternate occurs at positions 486 and 498. Residues Lys486 and Lys498 each carry the N6-succinyllysine; alternate modification. The active-site Proton acceptor is the His513. Residue Lys582 is modified to N6-acetyllysine.

This sequence belongs to the GMC oxidoreductase family. FAD is required as a cofactor. In terms of processing, acetylation of Lys-498 is observed in liver mitochondria from fasted mice but not from fed mice.

The protein resides in the mitochondrion inner membrane. It catalyses the reaction choline + A = betaine aldehyde + AH2. It participates in amine and polyamine biosynthesis; betaine biosynthesis via choline pathway; betaine aldehyde from choline (cytochrome c reductase route): step 1/1. The chain is Choline dehydrogenase, mitochondrial (Chdh) from Mus musculus (Mouse).